The following is a 373-amino-acid chain: Probable leucine aminopeptidase 1 (373 aa).

Positions M1–G18 are cleaved as a signal peptide. 2 residues coordinate Zn(2+): H176 and D195. The N-linked (GlcNAc...) asparagine glycan is linked to N196. Positions 234 and 261 each coordinate Zn(2+). Residue N288 is glycosylated (N-linked (GlcNAc...) asparagine). A disulfide bond links C310 and C314. H343 lines the Zn(2+) pocket.

The protein belongs to the peptidase M28 family. M28E subfamily. As to quaternary structure, monomer. Zn(2+) is required as a cofactor.

It localises to the secreted. In terms of biological role, extracellular aminopeptidase which contributes to pathogenicity. This is Probable leucine aminopeptidase 1 (LAP1) from Trichophyton verrucosum (strain HKI 0517).